Here is a 255-residue protein sequence, read N- to C-terminus: 5'-nucleotidase SurE (255 aa).

The a divalent metal cation site is built by Asp8, Asp9, Ser40, and Asn93.

It belongs to the SurE nucleotidase family. A divalent metal cation is required as a cofactor.

Its subcellular location is the cytoplasm. The enzyme catalyses a ribonucleoside 5'-phosphate + H2O = a ribonucleoside + phosphate. Functionally, nucleotidase that shows phosphatase activity on nucleoside 5'-monophosphates. The protein is 5'-nucleotidase SurE of Bradyrhizobium diazoefficiens (strain JCM 10833 / BCRC 13528 / IAM 13628 / NBRC 14792 / USDA 110).